A 272-amino-acid chain; its full sequence is Shikimate dehydrogenase (NADP(+)) (272 aa).

Shikimate is bound by residues 14–16 and Thr61; that span reads SKS. Catalysis depends on Lys65, which acts as the Proton acceptor. Position 77 (Glu77) interacts with NADP(+). Shikimate contacts are provided by Asn86 and Asp102. NADP(+) is bound by residues 126–130, 149–154, and Met213; these read GAGGA and NRTASR. Shikimate is bound at residue Tyr215. Residue Gly237 participates in NADP(+) binding.

Belongs to the shikimate dehydrogenase family. As to quaternary structure, homodimer.

The enzyme catalyses shikimate + NADP(+) = 3-dehydroshikimate + NADPH + H(+). It participates in metabolic intermediate biosynthesis; chorismate biosynthesis; chorismate from D-erythrose 4-phosphate and phosphoenolpyruvate: step 4/7. Involved in the biosynthesis of the chorismate, which leads to the biosynthesis of aromatic amino acids. Catalyzes the reversible NADPH linked reduction of 3-dehydroshikimate (DHSA) to yield shikimate (SA). This is Shikimate dehydrogenase (NADP(+)) from Salmonella choleraesuis (strain SC-B67).